A 516-amino-acid chain; its full sequence is Rho guanine nucleotide exchange factor 9 (516 aa).

Residues 8-67 (DSIVSAEAVWDHVTMANRELAFKAGDVIKVLDASNKDWWWGQIDDEEGWFPASFVRLWVN) form the SH3 domain. Residues 100–110 (RDQMRANVINE) form an interaction with GPHN region. Residues 103-287 (MRANVINEIM…RNVTQQINER (185 aa)) form the DH domain. The region spanning 318–425 (ELIYTGEMAW…WLRAFREERK (108 aa)) is the PH domain. Residues 450–480 (RKASKQKGVNSARSVPPSYPPPQDPLNQGQY) are disordered. A Phosphoserine modification is found at serine 502.

In terms of assembly, interacts with GPHN. In terms of tissue distribution, detected in embryonic and adult brain.

Its subcellular location is the cytoplasm. The protein resides in the postsynaptic density. Its function is as follows. Acts as a guanine nucleotide exchange factor (GEF) for CDC42. Promotes formation of GPHN clusters. The sequence is that of Rho guanine nucleotide exchange factor 9 (Arhgef9) from Mus musculus (Mouse).